Consider the following 470-residue polypeptide: Glycine--tRNA ligase (470 aa).

Substrate-binding residues include Arg94 and Glu183. ATP contacts are provided by residues 215–217 (RNE), 225–230 (FRMVEF), 298–299 (EI), and 342–345 (GCDR). Position 230–234 (230–234 (FEQME)) interacts with substrate. 338 to 342 (ETSSG) is a substrate binding site.

The protein belongs to the class-II aminoacyl-tRNA synthetase family. In terms of assembly, homodimer.

It localises to the cytoplasm. The catalysed reaction is tRNA(Gly) + glycine + ATP = glycyl-tRNA(Gly) + AMP + diphosphate. In terms of biological role, catalyzes the attachment of glycine to tRNA(Gly). The chain is Glycine--tRNA ligase from Chlorobaculum tepidum (strain ATCC 49652 / DSM 12025 / NBRC 103806 / TLS) (Chlorobium tepidum).